Reading from the N-terminus, the 166-residue chain is Protein UL5 (166 aa).

Interacts with host IQGAP1.

The protein resides in the host cytoplasm. May play a role in rearrangement of cellular cytoskeleton towards an efficient viral assembly and spreading. The protein is Protein UL5 (UL5) of Human cytomegalovirus (strain Merlin) (HHV-5).